Consider the following 1066-residue polypeptide: Beta-galactosidase (1066 aa).

2 residues coordinate substrate: Asn-110 and Asp-209. Residue Asp-209 coordinates Na(+). Glu-432, His-434, and Glu-477 together coordinate Mg(2+). Substrate-binding positions include Glu-477 and 553 to 556; that span reads EYAH. Glu-477 functions as the Proton donor in the catalytic mechanism. Glu-553 functions as the Nucleophile in the catalytic mechanism. Position 613 (Asn-613) interacts with Mg(2+). Na(+) contacts are provided by Phe-617 and Asn-620. The substrate site is built by Asn-620 and Trp-1041.

It belongs to the glycosyl hydrolase 2 family. As to quaternary structure, homotetramer. Requires Mg(2+) as cofactor. The cofactor is Na(+).

It carries out the reaction Hydrolysis of terminal non-reducing beta-D-galactose residues in beta-D-galactosides.. The polypeptide is Beta-galactosidase (Yersinia pseudotuberculosis serotype O:1b (strain IP 31758)).